The chain runs to 72 residues: Neuropeptide SIFamide (72 aa).

An N-terminal signal peptide occupies residues 1–26 (MALRFTLTLLLVTILVAAILLGSSEA). N-linked (GlcNAc...) asparagine glycosylation is present at Asn-34. Phe-38 bears the Phenylalanine amide mark. A propeptide spanning residues 42 to 72 (NSLDYDSAKMSAVCEVAMEACPMWFPQNDSK) is cleaved from the precursor.

This sequence belongs to the FARP (FMRFamide related peptide) family. As to expression, strongly expressed in two pairs of neurons in the pars intercerebralis (at protein level).

It is found in the secreted. Functionally, ligand for the neuropeptide SIFamide receptor. Modulates sexual behavior by negatively regulating female receptivity to male courtship and by playing a role in male sex discrimination. Also involved in promoting sleep. In Drosophila melanogaster (Fruit fly), this protein is Neuropeptide SIFamide.